The primary structure comprises 366 residues: Putative neutrophil cytosol factor 1C (366 aa).

In terms of domain architecture, PX spans Met1 to Leu101. SH3 domains are found at residues Ile132–Ser191 and Tyr202–Gln261. Positions Gln261 to Val366 are disordered. A phosphoserine mark is found at Ser279 and Ser280. A compositionally biased stretch (basic residues) spans His285–Arg294. 4 positions are modified to phosphoserine: Ser296, Ser304, Ser321, and Ser324.

Its subcellular location is the cytoplasm. Functionally, may be required for activation of the latent NADPH oxidase (necessary for superoxide production). In Homo sapiens (Human), this protein is Putative neutrophil cytosol factor 1C (NCF1C).